Consider the following 38-residue polypeptide: Putative ORF10 protein (38 aa).

Binds host ZYG11B. This would not play any role in SARS-CoV-2 infection.

The protein is Putative ORF10 protein of Severe acute respiratory syndrome coronavirus 2 (2019-nCoV).